Reading from the N-terminus, the 1000-residue chain is ATP-dependent DNA/RNA helicase DHX36 (1000 aa).

A required for recruitment to cytoplasmic stress granules region spans residues Met1 to Gly43. The interval Met1–Glu53 is disordered. The segment at Met1–Ala96 is required for the pre-miR-134 transport. The necessary for nuclear and nucleolar caps localizations stretch occupies residues Met1–Met192. Residues Pro15–Gly40 are compositionally biased toward gly residues. The interval His45–Lys67 is DSM (DHX36-specific motif). The segment at His45–Lys97 is required for G4-DNA- and G4-RNA-binding. RecA-like domain regions lie at residues Asn98–Ile378 and Pro379–Leu620. Ser153 carries the phosphoserine modification. Residues Val209 to Pro379 form the Helicase ATP-binding domain. An ATP-binding site is contributed by Gly225 to Thr230. The necessary for interaction with single-stranded DNA at the 3'-end of the G4-DNA structure stretch occupies residues Arg257–Gln309. The short motif at Asp326–His329 is the DEAH box element. Positions 327 and 329 each coordinate Mg(2+). The Helicase C-terminal domain maps to Ala469–Arg639. Residues Trp490 to Ser549 form a necessary for interaction with single-stranded DNA at the 3'-end of the G4-DNA structure region. The Nuclear localization signal signature appears at Asp509 to Met520. ATP-binding positions include Ser549 and Arg594–Arg597. Residues Pro621–Val690 are WH domain. Necessary for interaction with single-stranded DNA at the 3'-end of the G4-DNA structure regions lie at residues Glu630 to Pro689, Asn841 to His852, and His862 to Tyr892. An OB-fold-like subdomains region spans residues Pro833 to Val897. An N6-acetyllysine modification is found at Lys939.

In terms of assembly, found in a multi-helicase-TICAM1 complex at least composed of DHX36, DDX1, DDX21 and TICAM1; this complex exists in resting cells with or without dsRNA poly(I:C) ligand stimulation. Interacts (via C-terminus) with TICAM1 (via TIR domain). Interacts (via C-terminus) with DDX21; this interaction serves as bridges to TICAM1. Interacts with TERT; this interaction is dependent on the ability of DHX36 to bind to the G-quadruplex RNA (G4-RNA) structure present in the telomerase RNA template component (TERC). Interacts with DKC1; this interaction is dependent on the ability of DHX36 to bind to the G4-RNA structure present in TERC. Interacts with PARN; this interaction stimulates PARN to enhance uPA mRNA decay. Interacts with EXOSC3; this interaction occurs in a RNase-insensitive manner. Interacts with EXOSC10; this interaction occurs in a RNase-insensitive manner. Interacts with ILF3; this interaction occurs in a RNA-dependent manner. Interacts with ELAVL1; this interaction occurs in an RNA-dependent manner. Interacts with DDX5; this interaction occurs in a RNA-dependent manner. Interacts with DDX17; this interaction occurs in a RNA-dependent manner. Interacts with HDAC1; this interaction occurs in a RNA-dependent manner. Interacts with HDAC3; this interaction occurs in a RNA-dependent manner. Interacts with HDAC4. Interacts with AGO1. Interacts with AGO2. Interacts with ERCC6. The cofactor is Mg(2+).

It is found in the nucleus. The protein resides in the cytoplasm. Its subcellular location is the cytosol. The protein localises to the stress granule. It localises to the nucleus speckle. It is found in the chromosome. The protein resides in the telomere. Its subcellular location is the mitochondrion. The protein localises to the perikaryon. It localises to the cell projection. It is found in the dendrite. The protein resides in the axon. It catalyses the reaction ATP + H2O = ADP + phosphate + H(+). Its activity is regulated as follows. ATPase activity is enhanced in the presence of homomeric poly(U) RNAs, but not by double-stranded DNA (dsDNA), double-stranded RNA (dsRNA) and tRNA. Its function is as follows. Multifunctional ATP-dependent helicase that unwinds G-quadruplex (G4) structures. Plays a role in many biological processes such as genomic integrity, gene expression regulations and as a sensor to initiate antiviral responses. G4 structures correspond to helical structures containing guanine tetrads. Binds with high affinity to and unwinds G4 structures that are formed in nucleic acids (G4-DNA and G4-RNA). Plays a role in genomic integrity. Converts the G4-RNA structure present in telomerase RNA template component (TREC) into a double-stranded RNA to promote P1 helix formation that acts as a template boundary ensuring accurate reverse transcription. Plays a role in transcriptional regulation. Resolves G4-DNA structures in promoters of genes, such as YY1, KIT/c-kit and ALPL and positively regulates their expression. Plays a role in post-transcriptional regulation. Unwinds a G4-RNA structure located in the 3'-UTR polyadenylation site of the pre-mRNA TP53 and stimulates TP53 pre-mRNA 3'-end processing in response to ultraviolet (UV)-induced DNA damage. Binds to the precursor-microRNA-134 (pre-miR-134) terminal loop and regulates its transport into the synapto-dendritic compartment. Involved in the pre-miR-134-dependent inhibition of target gene expression and the control of dendritic spine size. Plays a role in the regulation of cytoplasmic mRNA translation and mRNA stability. Binds to both G4-RNA structures and alternative non-quadruplex-forming sequence within the 3'-UTR of the PITX1 mRNA regulating negatively PITX1 protein expression. Binds to both G4-RNA structure in the 5'-UTR and AU-rich elements (AREs) localized in the 3'-UTR of NKX2-5 mRNA to either stimulate protein translation or induce mRNA decay in an ELAVL1-dependent manner, respectively. Also binds to ARE sequences present in several mRNAs mediating exosome-mediated 3'-5' mRNA degradation. Involved in cytoplasmic urokinase-type plasminogen activator (uPA) mRNA decay. Component of a multi-helicase-TICAM1 complex that acts as a cytoplasmic sensor of viral double-stranded RNA (dsRNA) and plays a role in the activation of a cascade of antiviral responses including the induction of pro-inflammatory cytokines via the adapter molecule TICAM1. Required for the early embryonic development and hematopoiesis. Involved in the regulation of cardioblast differentiation and proliferation during heart development. Involved in spermatogonia differentiation. May play a role in ossification. This Rattus norvegicus (Rat) protein is ATP-dependent DNA/RNA helicase DHX36.